The sequence spans 451 residues: Phosphoglucosamine mutase (451 aa).

S107 serves as the catalytic Phosphoserine intermediate. Mg(2+) contacts are provided by S107, D246, D248, and D250. The residue at position 107 (S107) is a Phosphoserine.

The protein belongs to the phosphohexose mutase family. The cofactor is Mg(2+). Post-translationally, activated by phosphorylation.

The enzyme catalyses alpha-D-glucosamine 1-phosphate = D-glucosamine 6-phosphate. Catalyzes the conversion of glucosamine-6-phosphate to glucosamine-1-phosphate. The sequence is that of Phosphoglucosamine mutase from Burkholderia multivorans (strain ATCC 17616 / 249).